Here is a 92-residue protein sequence, read N- to C-terminus: Small ribosomal subunit protein uS19c (92 aa).

The protein belongs to the universal ribosomal protein uS19 family.

It is found in the plastid. Its subcellular location is the chloroplast. In terms of biological role, protein S19 forms a complex with S13 that binds strongly to the 16S ribosomal RNA. The polypeptide is Small ribosomal subunit protein uS19c (Oedogonium cardiacum (Filamentous green alga)).